The sequence spans 356 residues: Fe(3+) ions import ATP-binding protein FbpC 2 (356 aa).

Positions Leu-12–Met-246 constitute an ABC transporter domain. Gly-44–Thr-51 lines the ATP pocket.

Belongs to the ABC transporter superfamily. Fe(3+) ion importer (TC 3.A.1.10) family. As to quaternary structure, the complex is composed of two ATP-binding proteins (FbpC), two transmembrane proteins (FbpB) and a solute-binding protein (FbpA).

It localises to the cell inner membrane. It carries out the reaction Fe(3+)(out) + ATP + H2O = Fe(3+)(in) + ADP + phosphate + H(+). In terms of biological role, part of the ABC transporter complex FbpABC involved in Fe(3+) ions import. Responsible for energy coupling to the transport system. The protein is Fe(3+) ions import ATP-binding protein FbpC 2 of Haemophilus influenzae (strain ATCC 51907 / DSM 11121 / KW20 / Rd).